A 141-amino-acid polypeptide reads, in one-letter code: Hemoglobin subunit alpha-D (141 aa).

The 141-residue stretch at 1-141 (MLTADDKKLI…VASVLAEKYR (141 aa)) folds into the Globin domain. His58 and His87 together coordinate heme b.

It belongs to the globin family. Heterotetramer of two alpha-D chains and two beta chains. Red blood cells.

Functionally, involved in oxygen transport from the lung to the various peripheral tissues. This Rhea americana (Greater rhea) protein is Hemoglobin subunit alpha-D (HBAD).